Here is a 231-residue protein sequence, read N- to C-terminus: GFP-like fluorescent chromoprotein FP506 (231 aa).

The segment at residues 66 to 68 (NYG) is a cross-link (5-imidazolinone (Asn-Gly)). Tyr67 is subject to 2,3-didehydrotyrosine.

It belongs to the GFP family. In terms of processing, contains a chromophore consisting of modified amino acid residues. The chromophore is formed by autocatalytic backbone condensation between Xaa-N and Gly-(N+2), and oxidation of Tyr-(N+1) to didehydrotyrosine. Maturation of the chromophore requires nothing other than molecular oxygen. The precise stereochemistry of the tyrosine has not been determined. In terms of tissue distribution, tentacle and oral disk.

Its function is as follows. Pigment protein that is yellow-green in color. The protein is GFP-like fluorescent chromoprotein FP506 of Zoanthus sp. (Green polyp).